We begin with the raw amino-acid sequence, 248 residues long: Adenosylcobinamide-GDP ribazoletransferase (248 aa).

The next 5 helical transmembrane spans lie at 30–50, 54–74, 112–132, 134–154, and 188–208; these read LAESFSFFPLVGLILGFCYAL, VLSGVVPSLLLAVAITALTAV, FGALAIALAVAFKVAALDAVI, AGSFLPLLLVPVVSRLAMVLA, and AVSAFLVQPVFGLCALVLAAG.

It belongs to the CobS family. The cofactor is Mg(2+).

Its subcellular location is the cell inner membrane. It catalyses the reaction alpha-ribazole + adenosylcob(III)inamide-GDP = adenosylcob(III)alamin + GMP + H(+). It carries out the reaction alpha-ribazole 5'-phosphate + adenosylcob(III)inamide-GDP = adenosylcob(III)alamin 5'-phosphate + GMP + H(+). It functions in the pathway cofactor biosynthesis; adenosylcobalamin biosynthesis; adenosylcobalamin from cob(II)yrinate a,c-diamide: step 7/7. Its function is as follows. Joins adenosylcobinamide-GDP and alpha-ribazole to generate adenosylcobalamin (Ado-cobalamin). Also synthesizes adenosylcobalamin 5'-phosphate from adenosylcobinamide-GDP and alpha-ribazole 5'-phosphate. In Syntrophobacter fumaroxidans (strain DSM 10017 / MPOB), this protein is Adenosylcobinamide-GDP ribazoletransferase.